The following is a 622-amino-acid chain: Low affinity potassium transport system protein Kup (622 aa).

The next 12 membrane-spanning stretches (helical) occupy residues 9–29 (LPAI…TSPL), 49–69 (VFGF…IKYL), 103–123 (VIMG…TPAI), 137–157 (PQLD…LFMI), 165–185 (VGKL…VLGL), 213–233 (VSFI…ALYA), 247–267 (WFTV…ALLL), 276–296 (PFFL…AALA), 337–357 (IYIP…IVSF), 363–383 (LAAA…ILST), 396–416 (FVAL…SANL), and 419–439 (LLSG…IMTT).

Belongs to the HAK/KUP transporter (TC 2.A.72) family.

It localises to the cell inner membrane. The enzyme catalyses K(+)(in) + H(+)(in) = K(+)(out) + H(+)(out). Responsible for the low-affinity transport of potassium into the cell. Likely operates as a K(+):H(+) symporter. This chain is Low affinity potassium transport system protein Kup, found in Salmonella paratyphi B (strain ATCC BAA-1250 / SPB7).